Here is a 348-residue protein sequence, read N- to C-terminus: Uroporphyrinogen decarboxylase (348 aa).

Substrate-binding positions include 24-28 (RQAGR), Asp-73, Tyr-150, Ser-205, and His-324.

Belongs to the uroporphyrinogen decarboxylase family. As to quaternary structure, homodimer.

Its subcellular location is the cytoplasm. It catalyses the reaction uroporphyrinogen III + 4 H(+) = coproporphyrinogen III + 4 CO2. It functions in the pathway porphyrin-containing compound metabolism; protoporphyrin-IX biosynthesis; coproporphyrinogen-III from 5-aminolevulinate: step 4/4. Catalyzes the decarboxylation of four acetate groups of uroporphyrinogen-III to yield coproporphyrinogen-III. The chain is Uroporphyrinogen decarboxylase from Roseiflexus sp. (strain RS-1).